A 463-amino-acid polypeptide reads, in one-letter code: 23S rRNA (uracil(1939)-C(5))-methyltransferase RlmD (463 aa).

Residues K6–A76 form the TRAM domain. Residues C90, C96, C99, and C178 each contribute to the [4Fe-4S] cluster site. Q288, F317, N322, E341, D368, and D389 together coordinate S-adenosyl-L-methionine. The active-site Nucleophile is C415.

This sequence belongs to the class I-like SAM-binding methyltransferase superfamily. RNA M5U methyltransferase family. RlmD subfamily.

The enzyme catalyses uridine(1939) in 23S rRNA + S-adenosyl-L-methionine = 5-methyluridine(1939) in 23S rRNA + S-adenosyl-L-homocysteine + H(+). In terms of biological role, catalyzes the formation of 5-methyl-uridine at position 1939 (m5U1939) in 23S rRNA. In Acinetobacter baumannii (strain SDF), this protein is 23S rRNA (uracil(1939)-C(5))-methyltransferase RlmD.